The chain runs to 357 residues: Hyaluronidase (357 aa).

An N-terminal signal peptide occupies residues 1 to 26; sequence MLLVTLFLFFLQALVNGDSCGSNCEK. Cystine bridges form between Cys-45/Cys-334 and Cys-211/Cys-223. N-linked (GlcNAc...) asparagine glycosylation is found at Asn-105 and Asn-125. The active-site Proton donor is Glu-135. Asn-153 carries an N-linked (GlcNAc...) asparagine glycan. A glycan (N-linked (GlcNAc...) asparagine) is linked at Asn-351.

It belongs to the glycosyl hydrolase 56 family.

It is found in the secreted. The catalysed reaction is Random hydrolysis of (1-&gt;4)-linkages between N-acetyl-beta-D-glucosamine and D-glucuronate residues in hyaluronate.. Functionally, hydrolyzes high molecular weight hyaluronic acid to produce small oligosaccharides. This is Hyaluronidase from Vespa magnifica (Hornet).